The sequence spans 138 residues: uncharacterized protein (138 aa).

3 helical membrane-spanning segments follow: residues 17–37, 43–63, and 117–137; these read LIVS…TVFF, INLI…LLVC, and FWWM…VVSL.

It localises to the cell membrane. This is an uncharacterized protein from Mycoplasma pneumoniae (strain ATCC 29342 / M129 / Subtype 1) (Mycoplasmoides pneumoniae).